A 281-amino-acid chain; its full sequence is Undecaprenyl-diphosphatase (281 aa).

8 helical membrane passes run 1-21 (MNVL…FLPI), 45-65 (WTAF…IYFA), 93-113 (SKLG…GLVF), 125-145 (LIVI…SEVV), 155-175 (ISWL…VPGA), 195-215 (AARF…LLEF), 227-247 (FLVL…TIAF), and 256-276 (STNV…WMVF).

The protein belongs to the UppP family.

It is found in the cell inner membrane. It catalyses the reaction di-trans,octa-cis-undecaprenyl diphosphate + H2O = di-trans,octa-cis-undecaprenyl phosphate + phosphate + H(+). Functionally, catalyzes the dephosphorylation of undecaprenyl diphosphate (UPP). Confers resistance to bacitracin. The chain is Undecaprenyl-diphosphatase from Syntrophobacter fumaroxidans (strain DSM 10017 / MPOB).